The primary structure comprises 87 residues: UPF0335 protein RHECIAT_CH0003797 (87 aa).

Belongs to the UPF0335 family.

This Rhizobium etli (strain CIAT 652) protein is UPF0335 protein RHECIAT_CH0003797.